Reading from the N-terminus, the 276-residue chain is Diaminopimelate epimerase (276 aa).

Substrate-binding residues include Asn13, Gln46, and Asn66. Cys75 acts as the Proton donor in catalysis. Substrate-binding positions include 76–77 (GN), Asn159, Asn192, and 210–211 (ER). The active-site Proton acceptor is Cys219. Residue 220–221 (GT) participates in substrate binding.

The protein belongs to the diaminopimelate epimerase family. As to quaternary structure, homodimer.

It localises to the cytoplasm. The catalysed reaction is (2S,6S)-2,6-diaminopimelate = meso-2,6-diaminopimelate. Its pathway is amino-acid biosynthesis; L-lysine biosynthesis via DAP pathway; DL-2,6-diaminopimelate from LL-2,6-diaminopimelate: step 1/1. In terms of biological role, catalyzes the stereoinversion of LL-2,6-diaminopimelate (L,L-DAP) to meso-diaminopimelate (meso-DAP), a precursor of L-lysine and an essential component of the bacterial peptidoglycan. The sequence is that of Diaminopimelate epimerase from Pseudomonas fluorescens.